An 82-amino-acid chain; its full sequence is Delta-ctenitoxin-Pn2c (82 aa).

Positions 1–17 (MKVAILFLSILVLAVAS) are cleaved as a signal peptide. The propeptide occupies 18-34 (ESIEESRDDFAVEELGR). Disulfide bonds link C37–C51, C44–C57, C48–C80, C50–C65, and C59–C63.

In terms of tissue distribution, expressed by the venom gland.

It is found in the secreted. Its function is as follows. Reversible inhibitor of voltage-gated sodium channels (Nav). Delays the fast inactivation kinetics of neuronal-type sodium channels. In vivo, it induces rat penile erection. This effect may be due to the neuronal nitric oxide synthase (NOS1), since one of its selective inhibitor completely abolishes all the toxic effects of the toxin. This toxin also causes scratching, lacrimation, hypersalivation, sweating and agitation followed by spastic paralysis of the anterior and posterior extremities and death at dose levels of 0.24 mg/mouse. It is also insecticidal to the larval and adult forms of the house fly. This Phoneutria nigriventer (Brazilian armed spider) protein is Delta-ctenitoxin-Pn2c.